Here is a 1123-residue protein sequence, read N- to C-terminus: Translation initiation factor IF-2 (1123 aa).

Disordered stretches follow at residues 52–452 (LLKA…KVHI) and 480–512 (LARPSKPKSQQKAAPKPVAAMRKRRKETTRQRQ). Low complexity-rich tracts occupy residues 54-73 (KAGSAPRAAASPSKPAPGKA), 94-113 (KPAASSPPAAPAAPTKAKSP), and 121-133 (AAPSRPAAPKASA). Residues 170-187 (PPSPPARPVPQQPSPPSA) are compositionally biased toward pro residues. Over residues 193 to 206 (APIRRAAPNDAPRP) the composition is skewed to low complexity. 2 stretches are compositionally biased toward pro residues: residues 207 to 217 (ANAPPSRPQPK) and 258 to 268 (SPRPAVSPRPS). Positions 285-304 (RPGAPTRPGTGAGRPSRPGG) are enriched in low complexity. Residues 320–339 (GNRGEGGRPPGGARPAGGGN) are compositionally biased toward gly residues. Pro residues predominate over residues 388–403 (ATPPVSRPTATPPSPA). Over residues 412-422 (FRPGAGPGGQR) the composition is skewed to gly residues. The span at 425 to 439 (GRPDWDDSAKLDALR) shows a compositional bias: basic and acidic residues. The span at 486 to 499 (PKSQQKAAPKPVAA) shows a compositional bias: low complexity. The segment covering 500-512 (MRKRRKETTRQRQ) has biased composition (basic residues). Positions 615 to 787 (RRPPVVTVMG…LLLVTEVEDL (173 aa)) constitute a tr-type G domain. The segment at 624-631 (GHVDHGKT) is G1. 624 to 631 (GHVDHGKT) serves as a coordination point for GTP. Residues 649–653 (GITQH) are G2. A G3 region spans residues 674–677 (DTPG). GTP contacts are provided by residues 674 to 678 (DTPGH) and 728 to 731 (NKID). The segment at 728–731 (NKID) is G4. The interval 764–766 (SAI) is G5.

This sequence belongs to the TRAFAC class translation factor GTPase superfamily. Classic translation factor GTPase family. IF-2 subfamily.

Its subcellular location is the cytoplasm. Its function is as follows. One of the essential components for the initiation of protein synthesis. Protects formylmethionyl-tRNA from spontaneous hydrolysis and promotes its binding to the 30S ribosomal subunits. Also involved in the hydrolysis of GTP during the formation of the 70S ribosomal complex. In Synechococcus sp. (strain WH7803), this protein is Translation initiation factor IF-2.